Reading from the N-terminus, the 107-residue chain is Nucleoid-associated protein Pnec_0645 (107 aa).

This sequence belongs to the YbaB/EbfC family. In terms of assembly, homodimer.

The protein localises to the cytoplasm. It localises to the nucleoid. Its function is as follows. Binds to DNA and alters its conformation. May be involved in regulation of gene expression, nucleoid organization and DNA protection. This chain is Nucleoid-associated protein Pnec_0645, found in Polynucleobacter necessarius subsp. necessarius (strain STIR1).